We begin with the raw amino-acid sequence, 347 residues long: Probable dual-specificity RNA methyltransferase RlmN (347 aa).

Glutamate 93 serves as the catalytic Proton acceptor. Residues 100-323 (KAKRKTACVS…KKAGLNISTR (224 aa)) enclose the Radical SAM core domain. An intrachain disulfide couples cysteine 107 to cysteine 334. Residues cysteine 114, cysteine 118, and cysteine 121 each contribute to the [4Fe-4S] cluster site. Residues 160–161 (GE), serine 192, 215–217 (SLT), and asparagine 291 each bind S-adenosyl-L-methionine. Catalysis depends on cysteine 334, which acts as the S-methylcysteine intermediate.

Belongs to the radical SAM superfamily. RlmN family. Requires [4Fe-4S] cluster as cofactor.

It is found in the cytoplasm. It catalyses the reaction adenosine(2503) in 23S rRNA + 2 reduced [2Fe-2S]-[ferredoxin] + 2 S-adenosyl-L-methionine = 2-methyladenosine(2503) in 23S rRNA + 5'-deoxyadenosine + L-methionine + 2 oxidized [2Fe-2S]-[ferredoxin] + S-adenosyl-L-homocysteine. The catalysed reaction is adenosine(37) in tRNA + 2 reduced [2Fe-2S]-[ferredoxin] + 2 S-adenosyl-L-methionine = 2-methyladenosine(37) in tRNA + 5'-deoxyadenosine + L-methionine + 2 oxidized [2Fe-2S]-[ferredoxin] + S-adenosyl-L-homocysteine. In terms of biological role, specifically methylates position 2 of adenine 2503 in 23S rRNA and position 2 of adenine 37 in tRNAs. This Treponema denticola (strain ATCC 35405 / DSM 14222 / CIP 103919 / JCM 8153 / KCTC 15104) protein is Probable dual-specificity RNA methyltransferase RlmN.